Reading from the N-terminus, the 364-residue chain is Envelope glycoprotein US27 (364 aa).

Topologically, residues 1-36 are virion surface; it reads MTTSTTTTTNIMLQVSNVTNHTLNSTEIYQLFEYTR. N17, N20, and N24 each carry an N-linked (GlcNAc...) asparagine; by host glycan. Residues 37–57 form a helical membrane-spanning segment; that stretch reads FGVWLMCIVGTFLNMLVITTI. At 58-69 the chain is on the intravirion side; sequence LYYRRKKKSPSD. Residues 70–90 form a helical membrane-spanning segment; the sequence is TYICNLAVADLLIVVGLPFFL. Residues 91 to 103 are Virion surface-facing; that stretch reads EYAKHHPKLSREV. The chain crosses the membrane as a helical span at residues 104–124; that stretch reads VCSGLNACFYICLFAGVCFLI. The Intravirion portion of the chain corresponds to 125–150; it reads NLSMDRYCVIVWGVELNRVRNNKRAT. The helical transmembrane segment at 151 to 171 threads the bilayer; that stretch reads CWVVIFWILAALMGMPHYLMY. The Virion surface portion of the chain corresponds to 172–188; that stretch reads SHTNNECVGEFANETSG. Residues 189-209 form a helical membrane-spanning segment; that stretch reads WFPVFLNTKVNICGYLAPIVL. Topologically, residues 210–234 are intravirion; sequence MAYTYNRMVRFIINYVGKWHMQTLH. A helical membrane pass occupies residues 235 to 255; that stretch reads VLLVVVVSFASFWFPFNLALF. Residues 256-279 lie on the Virion surface side of the membrane; that stretch reads LESIRLLSGTQNETLQTVITFCLY. Residues 280 to 300 form a helical membrane-spanning segment; that stretch reads VGQFLAYVRACLNPGIYILVG. The Intravirion portion of the chain corresponds to 301–364; it reads TQMRKDMWTT…MESGEEEFLL (64 aa). Residues 344-364 form a disordered region; the sequence is KRTHYDRKHAPMESGEEEFLL.

It belongs to the G-protein coupled receptor 1 family. Heterodimerizes with US28.

The protein resides in the virion. The protein localises to the host cell membrane. In terms of biological role, plays an important role in spread of HCMV via the extracellular route. As a G-protein-coupled receptor (vGPCR), may activate signaling pathways important for virion assembly or egress processes. The protein is Envelope glycoprotein US27 (US27) of Homo sapiens (Human).